The sequence spans 353 residues: Polyprenal reductase 2 (353 aa).

A run of 6 helical transmembrane segments spans residues 11–31 (PLLC…ALPI), 78–98 (FMHF…AIWF), 175–195 (MHIV…LSLA), 234–254 (PLLK…WGSL), 291–308 (YLAE…SGAE), and 313–335 (WFLF…NWYL).

This sequence belongs to the steroid 5-alpha reductase family. Polyprenal reductase subfamily.

The protein resides in the cell membrane. It carries out the reaction a di-trans,poly-cis-dolichal + NADP(+) = a di-trans,poly-cis-polyprenal + NADPH + H(+). It functions in the pathway protein modification; protein glycosylation. Plays a key role in early steps of protein N-linked glycosylation by being involved in the conversion of polyprenol into dolichol. Acts as a polyprenal reductase that mediates the reduction of polyprenal into dolichal in a NADP-dependent mechanism. Dolichols are required for the synthesis of dolichol-linked monosaccharides and the oligosaccharide precursor used for N-glycosylation. The polypeptide is Polyprenal reductase 2 (Oryza sativa subsp. japonica (Rice)).